The chain runs to 161 residues: Endoribonuclease YbeY (161 aa).

Zn(2+) is bound by residues His-121, His-125, and His-131.

Belongs to the endoribonuclease YbeY family. Requires Zn(2+) as cofactor.

It localises to the cytoplasm. In terms of biological role, single strand-specific metallo-endoribonuclease involved in late-stage 70S ribosome quality control and in maturation of the 3' terminus of the 16S rRNA. The sequence is that of Endoribonuclease YbeY from Stenotrophomonas maltophilia (strain R551-3).